We begin with the raw amino-acid sequence, 168 residues long: Small ribosomal subunit protein uS5c (168 aa).

One can recognise an S5 DRBM domain in the interval 17 to 80 (WSERVIQITR…SDCKKQIIEF (64 aa)).

It belongs to the universal ribosomal protein uS5 family. Part of the 30S ribosomal subunit. Contacts protein S4.

The protein localises to the plastid. The protein resides in the chloroplast. With S4 and S12 plays an important role in translational accuracy. This is Small ribosomal subunit protein uS5c (rps5) from Cyanidium caldarium (Red alga).